We begin with the raw amino-acid sequence, 198 residues long: MSRYTGSLWKVSRRLNYSVSETGKELRKRAYGPGQHGQKKLKLSDYGLQLQEKQKLRFTYGVSEKQFRKTFDNASKLKGIHGEMFLVLLESRLDNVVYRLGFAKTRAQARQLANHGHILVDGKKVDIASYRLKPGQTVTLREKSKNLNIVQEAVNSKFVRADYVSLDKELVGKYVRYPQRNEFLPDINEQLIVEYYNR.

The S4 RNA-binding domain maps to 91-154 (SRLDNVVYRL…KNLNIVQEAV (64 aa)).

The protein belongs to the universal ribosomal protein uS4 family. As to quaternary structure, part of the 30S ribosomal subunit. Contacts protein S5. The interaction surface between S4 and S5 is involved in control of translational fidelity.

One of the primary rRNA binding proteins, it binds directly to 16S rRNA where it nucleates assembly of the body of the 30S subunit. Functionally, with S5 and S12 plays an important role in translational accuracy. This Onion yellows phytoplasma (strain OY-M) protein is Small ribosomal subunit protein uS4.